The primary structure comprises 429 residues: Adenylosuccinate synthetase (429 aa).

Residues 13–19 (GDEGKGK) and 41–43 (GHT) each bind GTP. Aspartate 14 serves as the catalytic Proton acceptor. Residues aspartate 14 and glycine 41 each coordinate Mg(2+). Residues 14 to 17 (DEGK), 39 to 42 (NAGH), threonine 130, arginine 144, glutamine 224, threonine 239, and arginine 303 contribute to the IMP site. The Proton donor role is filled by histidine 42. Residue 299–305 (ATTGRAR) participates in substrate binding. GTP contacts are provided by residues arginine 305, 331–333 (KLD), and 412–414 (STG).

This sequence belongs to the adenylosuccinate synthetase family. In terms of assembly, homodimer. It depends on Mg(2+) as a cofactor.

The protein localises to the cytoplasm. The catalysed reaction is IMP + L-aspartate + GTP = N(6)-(1,2-dicarboxyethyl)-AMP + GDP + phosphate + 2 H(+). The protein operates within purine metabolism; AMP biosynthesis via de novo pathway; AMP from IMP: step 1/2. In terms of biological role, plays an important role in the de novo pathway of purine nucleotide biosynthesis. Catalyzes the first committed step in the biosynthesis of AMP from IMP. The chain is Adenylosuccinate synthetase from Psychrobacter sp. (strain PRwf-1).